Consider the following 522-residue polypeptide: Perilipin-1 (522 aa).

At serine 81 the chain carries Phosphoserine. A Phosphothreonine modification is found at threonine 85. Phosphoserine occurs at positions 126, 130, 132, 137, and 174. Disordered regions lie at residues 195–217 (DKEESAPAPGHQQAQKSPKAKPS) and 287–318 (LAAAQEEDHEDQTDTEGEDTEEEEELETEENK). The segment covering 291–314 (QEEDHEDQTDTEGEDTEEEEELET) has biased composition (acidic residues). The tract at residues 291-319 (QEEDHEDQTDTEGEDTEEEEELETEENKF) is required for interaction with CIDEC. A phosphothreonine mark is found at threonine 299 and threonine 301. Phosphoserine is present on residues serine 382, serine 384, and serine 408. A disordered region spans residues 413–522 (ESEFRDIDNP…THYSQLRKKS (110 aa)). The segment covering 414 to 435 (SEFRDIDNPPAEVERREAERRA) has biased composition (basic and acidic residues). 3 positions are modified to phosphoserine: serine 436, serine 497, and serine 499.

It belongs to the perilipin family. Interacts with ABHD5. Interacts with CIDEC. Interacts with AQP7. Major cAMP-dependent protein kinase-substrate in adipocytes, also dephosphorylated by PP1. When phosphorylated, may be maximally sensitive to HSL and when unphosphorylated, may play a role in the inhibition of lipolysis, by acting as a barrier in lipid droplet. As to expression, detected in adipocytes from white adipose tissue (at protein level). Detected in visceral adipose tissue and mammary gland.

It is found in the endoplasmic reticulum. Its subcellular location is the lipid droplet. Modulator of adipocyte lipid metabolism. Coats lipid storage droplets to protect them from breakdown by hormone-sensitive lipase (HSL). Its absence may result in leanness. Plays a role in unilocular lipid droplet formation by activating CIDEC. Their interaction promotes lipid droplet enlargement and directional net neutral lipid transfer. May modulate lipolysis and triglyceride levels. In Homo sapiens (Human), this protein is Perilipin-1 (PLIN1).